The primary structure comprises 1520 residues: Myosin-5 (1520 aa).

A Myosin N-terminal SH3-like domain is found at 7–56; the sequence is IVGSHVWVEDPHLAWIDGEVTRIDGINVHVKTKKGKTVVTNVYFPKDTEA. A Myosin motor domain is found at 59–729; sequence GGVDDMTKLS…QMAELDARRA (671 aa). ATP contacts are provided by residues 153–160 and 206–214; these read GESGAGKT and NNNSSRFGK. 4 actin-binding regions span residues 492–526, 528–551, 586–610, and 610–632; these read LIEK…FQTF, EHER…AGEV, FHAL…KQQL, and LHSL…KPNN. 6 consecutive IQ domains span residues 732–761, 755–784, 780–809, 803–832, 828–857, and 851–880; these read LGNA…AAIV, IRNA…EAAA, IEAA…STIV, TRSS…RKAA, QRKA…AAIV, and LQKA…AARD. A coiled-coil region spans residues 881 to 1047; it reads TGALKDAKNK…ESENKVLRQQ (167 aa). The tract at residues 1062–1100 is disordered; sequence PKTTIIQRTPEKDTFSNGETTQLQEPETEDRPQKSLNQK. Over residues 1076 to 1086 the composition is skewed to polar residues; the sequence is FSNGETTQLQE. The Dilute domain occupies 1148–1463; that stretch reads NRIIETIASA…IATMRAEVSD (316 aa).

Belongs to the TRAFAC class myosin-kinesin ATPase superfamily. Myosin family. Plant myosin class XI subfamily. Homodimer. Interacts with MYOB1 and MYOB2. Interacts with PHOX1.

It localises to the cytoplasm. Its function is as follows. Myosin heavy chain that is required for the cell cycle-regulated transport of various organelles and proteins for their segregation. Functions by binding with its tail domain to receptor proteins on organelles and exerting force with its N-terminal motor domain against actin filaments, thereby transporting its cargo along polarized actin cables. Contributes to the trafficking of Golgi stacks, mitochondria and peroxisomes. Required for development of pavement cells, trichomes, and stigmatic papillae. The sequence is that of Myosin-5 (XI-1) from Arabidopsis thaliana (Mouse-ear cress).